The chain runs to 118 residues: Small ribosomal subunit protein uS13 (118 aa).

The tract at residues 94 to 118 is disordered; it reads SLPLRGQRTKTNARTRKGPRKPIKK.

The protein belongs to the universal ribosomal protein uS13 family. Part of the 30S ribosomal subunit. Forms a loose heterodimer with protein S19. Forms two bridges to the 50S subunit in the 70S ribosome.

In terms of biological role, located at the top of the head of the 30S subunit, it contacts several helices of the 16S rRNA. In the 70S ribosome it contacts the 23S rRNA (bridge B1a) and protein L5 of the 50S subunit (bridge B1b), connecting the 2 subunits; these bridges are implicated in subunit movement. Contacts the tRNAs in the A and P-sites. This is Small ribosomal subunit protein uS13 from Vibrio vulnificus (strain CMCP6).